The sequence spans 204 residues: Synaptosomal-associated protein 25-A (204 aa).

The span at 1 to 11 (MAEDSDMRNEL) shows a compositional bias: basic and acidic residues. The segment at 1–25 (MAEDSDMRNELADMQQRADQLADES) is disordered. T-SNARE coiled-coil homology domains are found at residues 19 to 81 (DQLA…LNDL) and 138 to 200 (DARE…ATKM).

This sequence belongs to the SNAP-25 family. In terms of tissue distribution, expressed in several regions throughout the adult brain, including the mesencephalon.

The protein resides in the synapse. Its subcellular location is the synaptosome. The protein localises to the cell membrane. Functionally, may play an important role in the synaptic function of specific neuronal systems. Associates with proteins involved in vesicle docking and membrane fusion. The chain is Synaptosomal-associated protein 25-A from Danio rerio (Zebrafish).